A 2149-amino-acid chain; its full sequence is Serine/threonine-protein kinase WNK2 (2149 aa).

Basic and acidic residues predominate over residues Met1–Ala10. 2 disordered regions span residues Met1–Val75 and Glu87–Leu183. Residues Arg19 and Arg30 each carry the omega-N-methylarginine modification. Ser45 is modified (phosphoserine). A compositionally biased stretch (pro residues) spans Ala95–Pro114. Residues Ala161–Glu172 show a composition bias toward basic and acidic residues. Residues Pro173–Asp182 are compositionally biased toward acidic residues. Residues Leu195–Phe453 form the Protein kinase domain. ATP contacts are provided by residues Ser205, Thr275 to Met278, and Lys325. Asp342 acts as the Proton acceptor in catalysis. Phosphoserine; by autocatalysis occurs at positions 352 and 356. Ser560 carries the phosphoserine modification. Disordered stretches follow at residues His578–Ser630, Ser703–Val728, and Gln1067–Ser1133. Polar residues predominate over residues Ala605–Tyr625. Positions Val709–Val728 are enriched in pro residues. The span at Gln1081–Thr1092 shows a compositional bias: polar residues. Residue Ser1098 is modified to Phosphoserine. Basic residues predominate over residues Ala1115 to Arg1126. A Phosphoserine modification is found at Ser1210. Disordered regions lie at residues Glu1211 to Ala1234 and Pro1270 to Asp1502. Low complexity-rich tracts occupy residues Ser1275–Gln1292 and Ser1317–Pro1353. The segment covering Arg1386–Gly1400 has biased composition (polar residues). Residues Leu1470–Ser1485 show a composition bias toward pro residues. A phosphoserine mark is found at Ser1507, Ser1566, and Ser1594. Disordered regions lie at residues Val1521 to Pro1727 and Ala1739 to Ala1778. Residues Ser1553 to Leu1567 show a composition bias toward polar residues. The segment covering Ser1587 to Ser1597 has biased composition (low complexity). Positions Ala1610 to Pro1629 are enriched in polar residues. Phosphoserine is present on residues Ser1725, Ser1726, Ser1770, and Ser1797. Positions Ala1916–Gly1928 are enriched in polar residues. The segment at Ala1916–Ser1947 is disordered. Phosphoserine is present on Ser1962. A compositionally biased stretch (polar residues) spans Ser2018–Leu2031. 2 disordered regions span residues Ser2018–His2044 and Gly2122–Asp2149. Positions Gly2122–Ala2135 are enriched in low complexity.

The protein belongs to the protein kinase superfamily. Ser/Thr protein kinase family. WNK subfamily. As to quaternary structure, forms a complex with the phosphorylated form of STK39 in the brain. The cofactor is Mg(2+). In terms of processing, autophosphorylated. Autophosphorylation at Ser-352 and Ser-356 promotes its activity. In terms of tissue distribution, brain and heart.

It localises to the cytoplasm. The protein resides in the cell membrane. It carries out the reaction L-seryl-[protein] + ATP = O-phospho-L-seryl-[protein] + ADP + H(+). It catalyses the reaction L-threonyl-[protein] + ATP = O-phospho-L-threonyl-[protein] + ADP + H(+). Activation requires autophosphorylation of Ser-356 and, to a lower extent, Ser-352. In terms of biological role, serine/threonine-protein kinase component of the WNK2-SPAK/OSR1 kinase cascade, which plays an important role in the regulation of electrolyte homeostasis, cell signaling, survival, and proliferation. The WNK2-SPAK/OSR1 kinase cascade is composed of WNK2, which mediates phosphorylation and activation of downstream kinases OXSR1/OSR1 and STK39/SPAK. Following activation, OXSR1/OSR1 and STK39/SPAK catalyze phosphorylation of ion cotransporters, regulating their activity. Acts as an activator and inhibitor of sodium-coupled chloride cotransporters and potassium-coupled chloride cotransporters respectively. Activates SLC12A2, SCNN1A, SCNN1B, SCNN1D and SGK1 and inhibits SLC12A5. Negatively regulates the EGF-induced activation of the ERK/MAPK-pathway and the downstream cell cycle progression. Affects MAPK3/MAPK1 activity by modulating the activity of MAP2K1 and this modulation depends on phosphorylation of MAP2K1 by PAK1. WNK2 acts by interfering with the activity of PAK1 by controlling the balance of the activity of upstream regulators of PAK1 activity, RHOA and RAC1, which display reciprocal activity. The sequence is that of Serine/threonine-protein kinase WNK2 from Mus musculus (Mouse).